Here is a 340-residue protein sequence, read N- to C-terminus: Tetraacyldisaccharide 4'-kinase (340 aa).

47–54 (SVGGTGKT) is an ATP binding site.

The protein belongs to the LpxK family.

It carries out the reaction a lipid A disaccharide + ATP = a lipid IVA + ADP + H(+). The protein operates within glycolipid biosynthesis; lipid IV(A) biosynthesis; lipid IV(A) from (3R)-3-hydroxytetradecanoyl-[acyl-carrier-protein] and UDP-N-acetyl-alpha-D-glucosamine: step 6/6. Its function is as follows. Transfers the gamma-phosphate of ATP to the 4'-position of a tetraacyldisaccharide 1-phosphate intermediate (termed DS-1-P) to form tetraacyldisaccharide 1,4'-bis-phosphate (lipid IVA). In Flavobacterium johnsoniae (strain ATCC 17061 / DSM 2064 / JCM 8514 / BCRC 14874 / CCUG 350202 / NBRC 14942 / NCIMB 11054 / UW101) (Cytophaga johnsonae), this protein is Tetraacyldisaccharide 4'-kinase.